A 122-amino-acid chain; its full sequence is Beta-2-microglobulin (122 aa).

The signal sequence occupies residues 1 to 22; the sequence is MMARIFILALLGQLCFLPYLDA. The 89-residue stretch at 27 to 115 folds into the Ig-like C1-type domain; sequence PKVQVYSRHP…HLTLQEPKVV (89 aa). C47 and C102 form a disulfide bridge.

The protein belongs to the beta-2-microglobulin family. Heterodimer of an alpha chain and a beta chain. Beta-2-microglobulin is the beta-chain of major histocompatibility complex class I molecules.

Its subcellular location is the secreted. Its function is as follows. Component of the class I major histocompatibility complex (MHC). Involved in the presentation of peptide antigens to the immune system. This is Beta-2-microglobulin (B2M) from Trichosurus vulpecula (Brush-tailed possum).